The following is a 104-amino-acid chain: MSYAIFKHGGKQYKVVEGDIVLLDKMNKEPKALVELVEVLAVSKEGKLSCGKPFVNGAKIEAEVINEGRSKKVITFKKRRRKDSKTKRGFRRDFTRVRITKIVA.

This sequence belongs to the bacterial ribosomal protein bL21 family. In terms of assembly, part of the 50S ribosomal subunit. Contacts protein L20.

In terms of biological role, this protein binds to 23S rRNA in the presence of protein L20. This Helicobacter pylori (strain J99 / ATCC 700824) (Campylobacter pylori J99) protein is Large ribosomal subunit protein bL21.